The chain runs to 244 residues: MSNSLIFKSQMAQLNTVLIEERNLEVLYEQLTEKLAKAPEGFFKGAAMVAHLKAVDNVDLSWLMHLKTVFQKHHLLLVGVTQHPFDSETLFRAGLIDVPFLEPKSAKLEGEEEIKSVDLNEEIESSSPHFLSGAAHRKTLTVRHHVRSGQRIYAHGGDLVVIGTVNAGAEILADGNIHVLGTLRGKAFAGIKNNEDAHIFCLEMAAEIISIAGIYQNLEKNAHTTKNNCLITLNSDETMQITPL.

The protein belongs to the MinC family. In terms of assembly, interacts with MinD and FtsZ.

In terms of biological role, cell division inhibitor that blocks the formation of polar Z ring septums. Rapidly oscillates between the poles of the cell to destabilize FtsZ filaments that have formed before they mature into polar Z rings. Prevents FtsZ polymerization. The sequence is that of Probable septum site-determining protein MinC from Dichelobacter nodosus (strain VCS1703A).